A 220-amino-acid chain; its full sequence is Type-4 uracil-DNA glycosylase (220 aa).

The [4Fe-4S] cluster site is built by Cys14 and Cys17. Residues 41–43 (GEA), Phe55, and Asn82 contribute to the uracil site. [4Fe-4S] cluster-binding residues include Cys86 and Cys102. His164 lines the uracil pocket.

It belongs to the uracil-DNA glycosylase (UDG) superfamily. Type 4 (UDGa) family.

The catalysed reaction is Hydrolyzes single-stranded DNA or mismatched double-stranded DNA and polynucleotides, releasing free uracil.. In terms of biological role, removes uracil bases that are present in DNA as a result of either deamination of cytosine or misincorporation of dUMP instead of dTMP. In Sulfurisphaera tokodaii (strain DSM 16993 / JCM 10545 / NBRC 100140 / 7) (Sulfolobus tokodaii), this protein is Type-4 uracil-DNA glycosylase.